Here is an 81-residue protein sequence, read N- to C-terminus: Conotoxin ViKr92 (81 aa).

An N-terminal signal peptide occupies residues 1-22 (MKLTWMMIVAVLFLTAWTFVTA). Positions 23–51 (DDTRYKLENPFLKARNELQKLEASQLNER) are excised as a propeptide. 3 disulfides stabilise this stretch: C53-C70, C60-C74, and C69-C78.

The protein belongs to the conotoxin O1 superfamily. In terms of tissue distribution, expressed by the venom duct.

Its subcellular location is the secreted. The polypeptide is Conotoxin ViKr92 (Conus virgo (Virgin cone)).